A 66-amino-acid polypeptide reads, in one-letter code: Beta-mammal toxin Cv3 (66 aa).

The LCN-type CS-alpha/beta domain occupies 1–66; the sequence is KEGYIVNYYD…VWPLPNKTCN (66 aa). 4 disulfide bridges follow: cysteine 12–cysteine 65, cysteine 16–cysteine 41, cysteine 25–cysteine 46, and cysteine 29–cysteine 48.

In terms of tissue distribution, expressed by the venom gland.

Its subcellular location is the secreted. In terms of biological role, beta toxins bind voltage-independently at site-4 of sodium channels (Nav) and reduces peak current and shifts the voltage of activation toward more negative potentials thereby affecting sodium channel activation and promoting spontaneous and repetitive firing. This toxin is strongly toxic to mice. The chain is Beta-mammal toxin Cv3 from Centruroides villegasi (Scorpion).